We begin with the raw amino-acid sequence, 55 residues long: Large ribosomal subunit protein bL33 (55 aa).

The protein belongs to the bacterial ribosomal protein bL33 family.

This Cereibacter sphaeroides (strain ATCC 17029 / ATH 2.4.9) (Rhodobacter sphaeroides) protein is Large ribosomal subunit protein bL33.